Reading from the N-terminus, the 259-residue chain is Undecaprenyl-diphosphatase (259 aa).

7 helical membrane passes run methionine 1–isoleucine 21, glutamine 40–tryptophan 60, tryptophan 75–glutamate 95, leucine 101–leucine 121, serine 179–leucine 199, leucine 206–isoleucine 226, and threonine 239–phenylalanine 259.

This sequence belongs to the UppP family.

The protein resides in the cell inner membrane. It catalyses the reaction di-trans,octa-cis-undecaprenyl diphosphate + H2O = di-trans,octa-cis-undecaprenyl phosphate + phosphate + H(+). Functionally, catalyzes the dephosphorylation of undecaprenyl diphosphate (UPP). Confers resistance to bacitracin. The chain is Undecaprenyl-diphosphatase from Halothermothrix orenii (strain H 168 / OCM 544 / DSM 9562).